The following is a 159-amino-acid chain: Lipoprotein LpqH (159 aa).

The N-terminal stretch at 1 to 21 (MKRGLTVAVAGAAILVAGLSG) is a signal peptide. Cysteine 22 is lipidated: N-palmitoyl cysteine. A lipid anchor (S-diacylglycerol cysteine) is attached at cysteine 22. The disordered stretch occupies residues 24–51 (SNKSTTGSGETTTAAGTTASPGAASGPK). Over residues 27-49 (STTGSGETTTAAGTTASPGAASG) the composition is skewed to low complexity.

Belongs to the mycobacterial 19 kDa antigen family. Post-translationally, modified by Lgt on Cys-22 with an S-linked diacylglycerol with a mixture of C16, C18 and C19 fatty acids, signal peptide is removed by LspA, modifed by Lnt with an amide-linked mixture of C16 and C19 fatty acids.

It is found in the cell membrane. Might be involved in ligand transport. A host TLR2 agonist, modifies host gene expression in response to pathogen. In Mycobacterium bovis (strain ATCC BAA-935 / AF2122/97), this protein is Lipoprotein LpqH (lpqH).